The sequence spans 682 residues: DNA-directed RNA polymerase subunit beta' (682 aa).

Positions 69, 71, 87, and 90 each coordinate Zn(2+). Asp489, Asp491, and Asp493 together coordinate Mg(2+).

This sequence belongs to the RNA polymerase beta' chain family. RpoC1 subfamily. In plastids the minimal PEP RNA polymerase catalytic core is composed of four subunits: alpha, beta, beta', and beta''. When a (nuclear-encoded) sigma factor is associated with the core the holoenzyme is formed, which can initiate transcription. The cofactor is Mg(2+). Zn(2+) serves as cofactor.

The protein localises to the plastid. It is found in the chloroplast. The enzyme catalyses RNA(n) + a ribonucleoside 5'-triphosphate = RNA(n+1) + diphosphate. In terms of biological role, DNA-dependent RNA polymerase catalyzes the transcription of DNA into RNA using the four ribonucleoside triphosphates as substrates. In Agrostis stolonifera (Creeping bentgrass), this protein is DNA-directed RNA polymerase subunit beta'.